A 462-amino-acid chain; its full sequence is Cysteine desulfurase, mitochondrial (462 aa).

Pyridoxal 5'-phosphate contacts are provided by residues 132 to 133 (AT), asparagine 212, glutamine 240, and 260 to 262 (SGH). Lysine 263 bears the N6-(pyridoxal phosphate)lysine mark. Pyridoxal 5'-phosphate is bound at residue threonine 300. The active-site Cysteine persulfide intermediate is cysteine 386. Residue cysteine 386 coordinates [2Fe-2S] cluster.

It belongs to the class-V pyridoxal-phosphate-dependent aminotransferase family. NifS/IscS subfamily. As to quaternary structure, component of the mitochondrial core iron-sulfur cluster (ISC) assembly complex at least composed of the cystein desulfurase Nfs1, the scaffold protein IscU, the accessory protein bcn92/Isd11/Lyrm4, and probably fh/frataxin. Interacts with bcn92/Isd11/Lyrm4 and IscU. Requires pyridoxal 5'-phosphate as cofactor. Ubiquitous expression at high levels in any life stage.

It localises to the mitochondrion. Its subcellular location is the nucleus. The catalysed reaction is (sulfur carrier)-H + L-cysteine = (sulfur carrier)-SH + L-alanine. Its activity is regulated as follows. Active when in complex with bcn92/Isd11/Lyrm4. L-cysteine binding kinetics are reduced in the presence of bcn92/Isd11/Lyrm4 and IscU. Activity is regulated by other components of the mitochondrial core iron-sulfur cluster (ISC) complex; Activity is reduced in the presence of IscU but enhanced when both IscU and fh/frataxin are present. Functionally, catalyzes the removal of elemental sulfur from cysteine to produce alanine. It supplies the inorganic sulfur for iron-sulfur (Fe-S) clusters. In Drosophila melanogaster (Fruit fly), this protein is Cysteine desulfurase, mitochondrial.